A 407-amino-acid polypeptide reads, in one-letter code: Lysine racemase (407 aa).

The N-terminal stretch at 1–18 (MSLGIRYLALLPLFVITA) is a signal peptide. The N-palmitoyl cysteine moiety is linked to residue Cys19. A lipid anchor (S-diacylglycerol cysteine) is attached at Cys19. Residues Cys70 and Cys96 are joined by a disulfide bond. Catalysis depends on Lys74, which acts as the Proton acceptor. Position 74 is an N6-(pyridoxal phosphate)lysine (Lys74). Arg173 contributes to the substrate binding site. The Proton acceptor role is filled by Tyr299. Substrate is bound at residue Met347.

Belongs to the alanine racemase family. Bsr subfamily. As to quaternary structure, forms a head-to-tail homodimer in the structure. It depends on pyridoxal 5'-phosphate as a cofactor.

It is found in the cell membrane. The protein resides in the periplasm. The catalysed reaction is L-lysine = D-lysine. It carries out the reaction L-arginine = D-arginine. With respect to regulation, the racemization activity of Lyr is completely inhibited by hydroxylamine. Its function is as follows. Amino-acid racemase that catalyzes the interconversion of L-lysine and D-lysine. To a lesser extent, is also able to interconvert arginine enantiomers. Cannot use methionine, asparagine, alanine, leucine, glutamine, phenylalanine and histidine as substrates. The chain is Lysine racemase from Proteus mirabilis.